The sequence spans 906 residues: Eukaryotic translation initiation factor 4 gamma 2 (906 aa).

Met-1 carries the post-translational modification N-acetylmethionine. The interval 1–71 (MESAIAEGGA…SAANNSANEK (71 aa)) is disordered. Ser-11 is modified (phosphoserine). Positions 78 to 308 (FRKVRGILNK…QDTVELREHH (231 aa)) constitute an MIF4G domain. Thr-89 bears the Phosphothreonine mark. An Omega-N-methylarginine modification is found at Arg-359. Position 394 is a phosphoserine (Ser-394). Lys-430 carries the post-translational modification N6-methyllysine. A Phosphoserine modification is found at Ser-442. Residues 497–540 (PPSAQPPRTQTPPLGQTPQLGLKTNPPLIQEKPAKTSKKPPPSK) form a disordered region. The segment covering 502–515 (PPRTQTPPLGQTPQ) has biased composition (polar residues). Arg-504 is modified (omega-N-methylarginine). Residues Thr-507 and Thr-513 each carry the phosphothreonine modification. Residues 542-665 (ELLKLTEAVV…SISELAQPLE (124 aa)) form the MI domain. Lys-574 is covalently cross-linked (Glycyl lysine isopeptide (Lys-Gly) (interchain with G-Cter in SUMO2)). Residues 719–903 (EGKGLSFLFP…ETAEEEESEE (185 aa)) form the W2 domain. Ser-901 is modified (phosphoserine).

This sequence belongs to the eukaryotic initiation factor 4G family. In terms of assembly, interacts with the serine/threonine protein kinases MKNK1 and MKNK2. Binds EIF4A and EIF3. Interacts with MIF4GD. Interacts with DAZAP2. Phosphorylation; hyperphosphorylated during mitosis. Ubiquitously expressed in all tissues examined.

Functionally, appears to play a role in the switch from cap-dependent to IRES-mediated translation during mitosis, apoptosis and viral infection. Cleaved by some caspases and viral proteases. This chain is Eukaryotic translation initiation factor 4 gamma 2, found in Mus musculus (Mouse).